A 784-amino-acid chain; its full sequence is E3 UFM1-protein ligase 1 homolog (784 aa).

Residues 398–414 (QEVDHGVMEEEKADKRE) are compositionally biased toward basic and acidic residues. Positions 398 to 472 (QEVDHGVMEE…ASNKKGGKDP (75 aa)) are disordered.

This sequence belongs to the UFL1 family.

In terms of biological role, E3 UFM1-protein ligase that mediates ufmylation of target proteins. In Anopheles gambiae (African malaria mosquito), this protein is E3 UFM1-protein ligase 1 homolog.